Consider the following 864-residue polypeptide: Alpha-glucosidase (864 aa).

Residues 1–22 (MAKVSFIFVAIALITGNVLCQT) form the signal peptide. N-linked (GlcNAc...) asparagine glycans are attached at residues N187, N364, and N406. D430 acts as the Nucleophile in catalysis. E433 is a catalytic residue. Residues N466 and N500 are each glycosylated (N-linked (GlcNAc...) asparagine). Residue D567 is the Proton donor of the active site. N-linked (GlcNAc...) asparagine glycosylation is found at N568 and N734.

Belongs to the glycosyl hydrolase 31 family.

The catalysed reaction is Hydrolysis of terminal, non-reducing (1-&gt;4)-linked alpha-D-glucose residues with release of alpha-D-glucose.. In terms of biological role, hydrolyzes not only malto-oligosaccharides but also soluble starch. In Mucor javanicus, this protein is Alpha-glucosidase.